The primary structure comprises 132 residues: Ribosome-binding factor A (132 aa).

The disordered stretch occupies residues 113 to 132 (EANSTRAKDDDEADAPAKDD).

It belongs to the RbfA family. As to quaternary structure, monomer. Binds 30S ribosomal subunits, but not 50S ribosomal subunits or 70S ribosomes.

Its subcellular location is the cytoplasm. Its function is as follows. One of several proteins that assist in the late maturation steps of the functional core of the 30S ribosomal subunit. Associates with free 30S ribosomal subunits (but not with 30S subunits that are part of 70S ribosomes or polysomes). Required for efficient processing of 16S rRNA. May interact with the 5'-terminal helix region of 16S rRNA. This chain is Ribosome-binding factor A, found in Burkholderia ambifaria (strain MC40-6).